We begin with the raw amino-acid sequence, 1001 residues long: Ribonuclease E/G-like protein, chloroplastic (1001 aa).

Residues methionine 1 to leucine 48 constitute a chloroplast transit peptide. The 110-residue stretch at serine 76–serine 185 folds into the CBM20 domain. Aspartate 755 lines the Mg(2+) pocket. Positions glutamine 769–arginine 789 form a coiled coil. Aspartate 800 provides a ligand contact to Mg(2+). Residues cysteine 858 and cysteine 861 each coordinate Zn(2+).

Belongs to the RNase E/G family. As to quaternary structure, part of a chloroplastic degradosome-like complex. Interacts with RHON1. A homotetramer formed by a dimer of dimers. Mg(2+) is required as a cofactor. Zn(2+) serves as cofactor. In terms of tissue distribution, expressed in cotyledons, rosette and cauline leaves.

Its subcellular location is the plastid. It is found in the chloroplast stroma. Its function is as follows. Involved in intercistronic processing of primary transcripts from chloroplast operons. The endonucleolytic activity of the enzyme depends on the number of phosphates at the 5' end, is inhibited by structured RNA, and preferentially cleaves A/U-rich sequences. This Arabidopsis thaliana (Mouse-ear cress) protein is Ribonuclease E/G-like protein, chloroplastic (RNE).